The sequence spans 266 residues: Diphthine synthase (266 aa).

S-adenosyl-L-methionine-binding positions include leucine 9, aspartate 84, valine 87, serine 112 to isoleucine 113, leucine 169, alanine 210, and histidine 235.

This sequence belongs to the diphthine synthase family. In terms of assembly, homodimer.

The enzyme catalyses 2-[(3S)-amino-3-carboxypropyl]-L-histidyl-[translation elongation factor 2] + 3 S-adenosyl-L-methionine = diphthine-[translation elongation factor 2] + 3 S-adenosyl-L-homocysteine + 3 H(+). It participates in protein modification; peptidyl-diphthamide biosynthesis. Functionally, S-adenosyl-L-methionine-dependent methyltransferase that catalyzes the trimethylation of the amino group of the modified target histidine residue in translation elongation factor 2 (EF-2), to form an intermediate called diphthine. The three successive methylation reactions represent the second step of diphthamide biosynthesis. This chain is Diphthine synthase, found in Methanosarcina acetivorans (strain ATCC 35395 / DSM 2834 / JCM 12185 / C2A).